The primary structure comprises 286 residues: uncharacterized protein (286 aa).

Residues 1-31 (MKKMSRRQFLKGMFGALAAGALTAGGGYGYA) constitute a signal peptide (tat-type signal). A divalent metal cation-binding residues include Asp65, His67, Asp97, Asn130, His221, and His223.

The protein belongs to the metallophosphoesterase superfamily. The cofactor is a divalent metal cation. Post-translationally, predicted to be exported by the Tat system. The position of the signal peptide cleavage has not been experimentally proven.

This is an uncharacterized protein from Bacillus subtilis (strain 168).